The primary structure comprises 237 residues: Ferritin, mitochondrial (237 aa).

A mitochondrion-targeting transit peptide spans 1–49 (MLSCFWFFSKHISSALMSLPRVLHRFTAPQCLASRYPLGPLLASPRRLL). The region spanning 66 to 215 (QNFHPDSEAA…DHVHNLVTMG (150 aa)) is the Ferritin-like diiron domain. The Fe cation site is built by Glu83, Glu118, His121, Glu163, and Gln197.

Belongs to the ferritin family. As to quaternary structure, homooligomer of 24 subunits. The functional molecule is roughly spherical and contains a central cavity into which the polymeric mineral iron core is deposited.

The protein resides in the mitochondrion. The enzyme catalyses 4 Fe(2+) + O2 + 4 H(+) = 4 Fe(3+) + 2 H2O. In terms of biological role, catalyzes the oxidation of ferrous iron(II) to ferric iron(III) and stores iron in a soluble, non-toxic, readily available form. Important for iron homeostasis. Iron is taken up in the ferrous form and deposited as ferric hydroxides after oxidation. This Mus musculus (Mouse) protein is Ferritin, mitochondrial.